Here is a 406-residue protein sequence, read N- to C-terminus: UPF0761 membrane protein NMB0524 (406 aa).

6 helical membrane-spanning segments follow: residues 43–63 (LLAL…FPVF), 100–120 (LTAI…RTID), 139–159 (FLVY…GISF), 176–196 (WSGA…LWGL), 210–230 (AFVG…LFTW), and 248–268 (VPFF…GAVL).

The protein belongs to the UPF0761 family.

The protein localises to the cell inner membrane. This is UPF0761 membrane protein NMB0524 from Neisseria meningitidis serogroup B (strain ATCC BAA-335 / MC58).